The chain runs to 387 residues: V-set and immunoglobulin domain-containing protein 1 (387 aa).

The signal sequence occupies residues methionine 1–valine 21. The Ig-like V-type domain occupies valine 22–leucine 132. Residues valine 22–glutamate 232 lie on the Extracellular side of the membrane. Residues asparagine 32 and asparagine 38 are each glycosylated (N-linked (GlcNAc...) asparagine). Cysteines 43 and 116 form a disulfide. 3 N-linked (GlcNAc...) asparagine glycosylation sites follow: asparagine 133, asparagine 200, and asparagine 219. The Ig-like C2-type domain occupies proline 140–threonine 227. Cysteines 161 and 211 form a disulfide. A helical transmembrane segment spans residues valine 233–valine 253. Residues valine 254–alanine 387 are Cytoplasmic-facing. Residues lysine 266–alanine 387 are disordered. Residues proline 284–alanine 296 are compositionally biased toward basic and acidic residues. Polar residues predominate over residues leucine 299 to histidine 308. Residues threonine 325–glycine 335 show a composition bias toward pro residues. Residues leucine 344 to serine 368 are compositionally biased toward acidic residues.

In terms of processing, highly N-glycosylated. Appears not to contain significant amounts of O-linked carbohydrates or sialic acid in its sugar moieties. Detected only in stomach mucosa and testis, and to a much lesser level in pancreas (at protein level). Detected in gastric cancers (31%), esophageal carcinomas (50%) and ovarian cancers (23%).

It is found in the membrane. This is V-set and immunoglobulin domain-containing protein 1 (VSIG1) from Homo sapiens (Human).